Here is a 301-residue protein sequence, read N- to C-terminus: Acetaldehyde dehydrogenase (301 aa).

Catalysis depends on C130, which acts as the Acyl-thioester intermediate. NAD(+) is bound by residues 161–169 (SVGPGTRRN) and N272.

Belongs to the acetaldehyde dehydrogenase family.

It catalyses the reaction acetaldehyde + NAD(+) + CoA = acetyl-CoA + NADH + H(+). The protein is Acetaldehyde dehydrogenase (mhpF) of Cupriavidus taiwanensis (strain DSM 17343 / BCRC 17206 / CCUG 44338 / CIP 107171 / LMG 19424 / R1) (Ralstonia taiwanensis (strain LMG 19424)).